A 509-amino-acid polypeptide reads, in one-letter code: Methylmalonyl-CoA decarboxylase subunit alpha (509 aa).

The CoA carboxyltransferase N-terminal domain occupies 4–260 (VQEKIELLHE…NNMEDAPLVD (257 aa)). Residues 267–503 (REDESLNSLL…SKRENRAPKK (237 aa)) form the CoA carboxyltransferase C-terminal domain.

It belongs to the AccD/PCCB family. As to quaternary structure, the methylmalonyl-CoA decarboxylase is composed of five subunits: the carboxyltransferase alpha subunit (MmdA), the tunnel beta subunit (MmdB), the biotin-containing gamma subunit (MmdC), and the delta (MmdD) and epsilon (MmdE) subunits. Interacts with the gamma subunit.

The protein localises to the cell membrane. It catalyses the reaction (S)-methylmalonyl-CoA + Na(+)(in) + H(+)(out) = propanoyl-CoA + Na(+)(out) + CO2. Completely inhibited by avidin. Its function is as follows. Carboxyltransferase subunit of the sodium ion pump methylmalonyl-CoA decarboxylase, which converts the chemical energy of a decarboxylation reaction into an electrochemical gradient of Na(+) ions across the cytoplasmic membrane, thereby creating a sodium ion motive force that is used for ATP synthesis. The alpha subunit catalyzes the Na(+)-independent carboxyltransfer from methylmalonyl-CoA to the prosthetic biotin group located on the gamma subunit. Can also convert malonyl-CoA into acetyl-CoA. The protein is Methylmalonyl-CoA decarboxylase subunit alpha of Veillonella parvula (Staphylococcus parvulus).